Here is a 540-residue protein sequence, read N- to C-terminus: 2,3-bisphosphoglycerate-independent phosphoglycerate mutase (540 aa).

2 residues coordinate Mn(2+): Asp-13 and Ser-63. Catalysis depends on Ser-63, which acts as the Phosphoserine intermediate. Residues His-124, 154-155, Arg-186, Arg-192, 262-265, and Lys-356 each bind substrate; these read RD and RPDR. 5 residues coordinate Mn(2+): Asp-423, His-427, Asp-464, His-465, and His-483.

This sequence belongs to the BPG-independent phosphoglycerate mutase family. As to quaternary structure, monomer. Mn(2+) is required as a cofactor.

The catalysed reaction is (2R)-2-phosphoglycerate = (2R)-3-phosphoglycerate. Its pathway is carbohydrate degradation; glycolysis; pyruvate from D-glyceraldehyde 3-phosphate: step 3/5. In terms of biological role, catalyzes the interconversion of 2-phosphoglycerate and 3-phosphoglycerate. The chain is 2,3-bisphosphoglycerate-independent phosphoglycerate mutase from Chloroflexus aggregans (strain MD-66 / DSM 9485).